The chain runs to 261 residues: Ribosomal RNA small subunit methyltransferase J (261 aa).

S-adenosyl-L-methionine contacts are provided by residues 101 to 102 (RD), 117 to 118 (ER), 153 to 154 (SS), and aspartate 176.

This sequence belongs to the methyltransferase superfamily. RsmJ family.

The protein resides in the cytoplasm. It catalyses the reaction guanosine(1516) in 16S rRNA + S-adenosyl-L-methionine = N(2)-methylguanosine(1516) in 16S rRNA + S-adenosyl-L-homocysteine + H(+). Its function is as follows. Specifically methylates the guanosine in position 1516 of 16S rRNA. In Vibrio cholerae serotype O1 (strain ATCC 39315 / El Tor Inaba N16961), this protein is Ribosomal RNA small subunit methyltransferase J.